The primary structure comprises 732 residues: Catalase-peroxidase (732 aa).

The segment covering 1-10 has biased composition (basic and acidic residues); the sequence is MDAKTDDKAG. The tract at residues 1 to 26 is disordered; sequence MDAKTDDKAGKCPVAHGPAPRGNRDW. The tryptophyl-tyrosyl-methioninium (Trp-Tyr) (with M-243) cross-link spans 95 to 217; sequence WHSAGTYRTT…LGAVQMGLIY (123 aa). Histidine 96 functions as the Proton acceptor in the catalytic mechanism. The segment at residues 217 to 243 is a cross-link (tryptophyl-tyrosyl-methioninium (Tyr-Met) (with W-95)); the sequence is YVNPEGPNGNPDPLGSAKDIRETFARM. Histidine 258 lines the heme b pocket.

This sequence belongs to the peroxidase family. Peroxidase/catalase subfamily. In terms of assembly, homodimer or homotetramer. Requires heme b as cofactor. Formation of the three residue Trp-Tyr-Met cross-link is important for the catalase, but not the peroxidase activity of the enzyme.

It catalyses the reaction H2O2 + AH2 = A + 2 H2O. The enzyme catalyses 2 H2O2 = O2 + 2 H2O. Functionally, bifunctional enzyme with both catalase and broad-spectrum peroxidase activity. This is Catalase-peroxidase from Rhodopseudomonas palustris (strain BisB18).